The following is a 373-amino-acid chain: Chaperone protein DnaJ (373 aa).

Residues 5-69 (DYYEVLGVNK…NKRVNYDQFG (65 aa)) enclose the J domain. The segment at 130-212 (GTKKEISIKK…CKGKGTENKT (83 aa)) adopts a CR-type zinc-finger fold. Residues cysteine 143, cysteine 146, cysteine 160, cysteine 163, cysteine 186, cysteine 189, cysteine 200, and cysteine 203 each coordinate Zn(2+). CXXCXGXG motif repeat units lie at residues 143-150 (CHTCNGDG), 160-167 (CSYCNGAG), 186-193 (CPKCEGSG), and 200-207 (CPTCKGKG).

It belongs to the DnaJ family. As to quaternary structure, homodimer. Requires Zn(2+) as cofactor.

It is found in the cytoplasm. In terms of biological role, participates actively in the response to hyperosmotic and heat shock by preventing the aggregation of stress-denatured proteins and by disaggregating proteins, also in an autonomous, DnaK-independent fashion. Unfolded proteins bind initially to DnaJ; upon interaction with the DnaJ-bound protein, DnaK hydrolyzes its bound ATP, resulting in the formation of a stable complex. GrpE releases ADP from DnaK; ATP binding to DnaK triggers the release of the substrate protein, thus completing the reaction cycle. Several rounds of ATP-dependent interactions between DnaJ, DnaK and GrpE are required for fully efficient folding. Also involved, together with DnaK and GrpE, in the DNA replication of plasmids through activation of initiation proteins. In Staphylococcus epidermidis (strain ATCC 35984 / DSM 28319 / BCRC 17069 / CCUG 31568 / BM 3577 / RP62A), this protein is Chaperone protein DnaJ.